A 297-amino-acid chain; its full sequence is GTP cyclohydrolase FolE2 (297 aa).

It belongs to the GTP cyclohydrolase IV family.

It catalyses the reaction GTP + H2O = 7,8-dihydroneopterin 3'-triphosphate + formate + H(+). Its pathway is cofactor biosynthesis; 7,8-dihydroneopterin triphosphate biosynthesis; 7,8-dihydroneopterin triphosphate from GTP: step 1/1. Its function is as follows. Converts GTP to 7,8-dihydroneopterin triphosphate. In Pseudomonas fluorescens (strain ATCC BAA-477 / NRRL B-23932 / Pf-5), this protein is GTP cyclohydrolase FolE2.